The primary structure comprises 244 residues: Phosphoadenosine 5'-phosphosulfate reductase (244 aa).

The active-site Nucleophile; cysteine thiosulfonate intermediate is the C239.

It belongs to the PAPS reductase family. CysH subfamily.

The protein localises to the cytoplasm. The enzyme catalyses [thioredoxin]-disulfide + sulfite + adenosine 3',5'-bisphosphate + 2 H(+) = [thioredoxin]-dithiol + 3'-phosphoadenylyl sulfate. Its pathway is sulfur metabolism; hydrogen sulfide biosynthesis; sulfite from sulfate: step 3/3. In terms of biological role, catalyzes the formation of sulfite from phosphoadenosine 5'-phosphosulfate (PAPS) using thioredoxin as an electron donor. The sequence is that of Phosphoadenosine 5'-phosphosulfate reductase from Salmonella choleraesuis (strain SC-B67).